The primary structure comprises 226 residues: Ribosomal RNA small subunit methyltransferase G (226 aa).

Residues glycine 95, leucine 100, 146 to 147, and arginine 159 each bind S-adenosyl-L-methionine; that span reads VE.

The protein belongs to the methyltransferase superfamily. RNA methyltransferase RsmG family.

The protein resides in the cytoplasm. The catalysed reaction is guanosine(527) in 16S rRNA + S-adenosyl-L-methionine = N(7)-methylguanosine(527) in 16S rRNA + S-adenosyl-L-homocysteine. Specifically methylates the N7 position of guanine in position 527 of 16S rRNA. The polypeptide is Ribosomal RNA small subunit methyltransferase G (Acidovorax ebreus (strain TPSY) (Diaphorobacter sp. (strain TPSY))).